Here is a 430-residue protein sequence, read N- to C-terminus: MGKDKKDRKHKGGLTEDILEKNVTKPSKRVKHRRERQADSVESFVEEKLSKKILEQARQQQDELMEEYGFRKTGDRKTLKSAQTTLGTPDLDRIDDDDEDDSDDGASMTSETYYENVEVDEEEEKAFEMFMSQEAPTRRTLADVIMEKIQDKKTEIESHMSEQSTAPQMDERLVKVFKGVGEILKKYRSGKLPKAFKFIPSLTNWEEVLFITEPDEWSAAALFQATKIFVSNLNAKMAQRFFNLVLLPRIQDDIAEYKRLNYHLYMALKKALFKPAAFFKGILLPMCESGNCSLREAIIISSVLAKTTIPVLHSSAVILKIAEMNYSGANSIFLRTLFDKKYALPYRVIDAAVYHFLRFLTDKRTLPVLWHQCLLTFVQRYKEDISSEQKEALMELCRVHVHDKITPEVRRELVHSKSRDMETDQPMEST.

2 stretches are compositionally biased toward basic residues: residues 1 to 12 (MGKDKKDRKHKG) and 26 to 35 (PSKRVKHRRE). 2 disordered regions span residues 1–45 (MGKD…ESFV) and 65–113 (MEEY…SETY). Over residues 68–78 (YGFRKTGDRKT) the composition is skewed to basic and acidic residues. Residues 93–104 (RIDDDDEDDSDD) are compositionally biased toward acidic residues.

Belongs to the bystin family.

It is found in the nucleus. The protein resides in the nucleolus. Functionally, required for processing of 20S pre-rRNA precursor and biogenesis of 40S ribosomal subunits. This chain is Bystin (bysl), found in Nematostella vectensis (Starlet sea anemone).